Reading from the N-terminus, the 339-residue chain is Glycerol-3-phosphate dehydrogenase [NAD(P)+] (339 aa).

Positions 31, 32, 52, and 122 each coordinate NADPH. The sn-glycerol 3-phosphate site is built by K122 and G152. A156 provides a ligand contact to NADPH. The sn-glycerol 3-phosphate site is built by K207, D260, S270, R271, and N272. The Proton acceptor role is filled by K207. Residue R271 coordinates NADPH. E293 lines the NADPH pocket.

Belongs to the NAD-dependent glycerol-3-phosphate dehydrogenase family.

The protein localises to the cytoplasm. It catalyses the reaction sn-glycerol 3-phosphate + NAD(+) = dihydroxyacetone phosphate + NADH + H(+). The enzyme catalyses sn-glycerol 3-phosphate + NADP(+) = dihydroxyacetone phosphate + NADPH + H(+). The protein operates within membrane lipid metabolism; glycerophospholipid metabolism. In terms of biological role, catalyzes the reduction of the glycolytic intermediate dihydroxyacetone phosphate (DHAP) to sn-glycerol 3-phosphate (G3P), the key precursor for phospholipid synthesis. In Tropheryma whipplei (strain Twist) (Whipple's bacillus), this protein is Glycerol-3-phosphate dehydrogenase [NAD(P)+].